We begin with the raw amino-acid sequence, 426 residues long: Serine--tRNA ligase (426 aa).

Residue 233–235 (TAE) coordinates L-serine. Residue 264–266 (RSE) coordinates ATP. Residue Glu-287 coordinates L-serine. 351 to 354 (EISS) lines the ATP pocket. Ser-385 contacts L-serine.

It belongs to the class-II aminoacyl-tRNA synthetase family. Type-1 seryl-tRNA synthetase subfamily. Homodimer. The tRNA molecule binds across the dimer.

It is found in the cytoplasm. It carries out the reaction tRNA(Ser) + L-serine + ATP = L-seryl-tRNA(Ser) + AMP + diphosphate + H(+). It catalyses the reaction tRNA(Sec) + L-serine + ATP = L-seryl-tRNA(Sec) + AMP + diphosphate + H(+). Its pathway is aminoacyl-tRNA biosynthesis; selenocysteinyl-tRNA(Sec) biosynthesis; L-seryl-tRNA(Sec) from L-serine and tRNA(Sec): step 1/1. In terms of biological role, catalyzes the attachment of serine to tRNA(Ser). Is also able to aminoacylate tRNA(Sec) with serine, to form the misacylated tRNA L-seryl-tRNA(Sec), which will be further converted into selenocysteinyl-tRNA(Sec). In Brachyspira hyodysenteriae (strain ATCC 49526 / WA1), this protein is Serine--tRNA ligase.